We begin with the raw amino-acid sequence, 505 residues long: Prenylcysteine oxidase 1 (505 aa).

The signal sequence occupies residues Met-1 to Ala-28. Asn-196, Asn-323, and Asn-353 each carry an N-linked (GlcNAc...) asparagine glycan.

The protein belongs to the prenylcysteine oxidase family. Requires FAD as cofactor. Highly expressed in the liver, kidney, heart and brain.

The protein resides in the lysosome. The enzyme catalyses an S-polyprenyl-L-cysteine + O2 + H2O = a polyprenal + L-cysteine + H2O2. The catalysed reaction is S-(2E,6E)-farnesyl-L-cysteine + O2 + H2O = (2E,6E)-farnesal + L-cysteine + H2O2. It catalyses the reaction [(2E,6E,10E)-geranylgeranyl]-L-cysteine + O2 + H2O = (2E,6E,10E)-geranylgeranial + L-cysteine + H2O2. In terms of biological role, prenylcysteine oxidase that cleaves the thioether bond of prenyl-L-cysteines, such as farnesylcysteine and geranylgeranylcysteine. Only active against free prenylcysteines and not prenylcysteine residues within prenylated proteins or peptides. Involved in the final step in the degradation of prenylated proteins, by degrading prenylcysteines after the protein has been degraded. In Mus musculus (Mouse), this protein is Prenylcysteine oxidase 1.